Reading from the N-terminus, the 481-residue chain is Pentatricopeptide repeat-containing protein 8, mitochondrial (481 aa).

A mitochondrion-targeting transit peptide spans 1 to 55; that stretch reads MQGFGSQIFRKLLRSSNAKVSDALLQNTRTLFTAPPLHSGLQTSFTAETQQHVRQ. 2 PPR repeats span residues 137-172 and 365-399; these read SARFWRIMLQSYIDLNLFDKASLIADMSLSHMEFLP and SISTANTLFSIASRLKDVKWLSAGFDMIDKYGLKP.

It localises to the mitochondrion. Functionally, mitochondrial RNA-binding protein involved in mitochondrial translation. The cox1 mRNA is one target but it is not clear if ppr8 has a single or multiple targets. The chain is Pentatricopeptide repeat-containing protein 8, mitochondrial (ppr8) from Schizosaccharomyces pombe (strain 972 / ATCC 24843) (Fission yeast).